Consider the following 166-residue polypeptide: Co-chaperone protein HscB homolog (166 aa).

In terms of domain architecture, J spans 3-75 (QYFTLFRIEP…IDRAAYLLKT (73 aa)).

Belongs to the HscB family. In terms of assembly, interacts with HscA and stimulates its ATPase activity.

Its function is as follows. Co-chaperone involved in the maturation of iron-sulfur cluster-containing proteins. Seems to help targeting proteins to be folded toward HscA. In Neisseria meningitidis serogroup C (strain 053442), this protein is Co-chaperone protein HscB homolog.